The primary structure comprises 242 residues: DnaJ homolog subfamily B member 6 (242 aa).

The region spanning 3–69 (EYYDVLGVQR…KKRDIYDKYG (67 aa)) is the J domain.

In terms of assembly, homooligomer.

The protein localises to the cytoplasm. It is found in the perinuclear region. It localises to the nucleus. Its function is as follows. Has a stimulatory effect on the ATPase activity of HSP70 in a dose-dependent and time-dependent manner and hence acts as a co-chaperone of HSP70. Plays an indispensable role in the organization of KRT8/KRT18 filaments. Acts as an endogenous molecular chaperone for neuronal proteins including huntingtin. Suppresses aggregation and toxicity of polyglutamine-containing, aggregation-prone proteins. Also reduces cellular toxicity and caspase-3 activity. The chain is DnaJ homolog subfamily B member 6 from Xenopus tropicalis (Western clawed frog).